Here is a 553-residue protein sequence, read N- to C-terminus: MREYLTEHIKQALHKASIPASRAIKIEKPSDSRFGDFSTNIALVLAGECGMNPRQLAQKITENLSFSETTVSKTEIAGPGFINFYLEPAFIMKQVEQIITSSDRFGRGAAGEGKNAIVEYVSANPTGPLTIGRGRGGVLGDCIANILEAHGYTVTREYYFNDAGRQMSILSESVRLRYIELCGIAVEFPETHYQGDYIREIAAAILEKHGEKLVESDSTELFKQTAETHIFTHIKNTLHRLDITHDSYFNEHRLYQEDESGISPNQQVIDALRQKGFIDHYDGATWFMTTRLGQEKDKVLVKSSGEPSYRLPDIAYHVTKFERGFDEIVNIFGADHIDEYPDVIEALKILGYDTDRIRVAINQFVTTTVNGETVKMSTRKGNADLLDDLIDDVGADATRLFFIMRSKDSHLNFDIDLAKKQSKDNPVFYLQYAHARICSLLRIAENEAGFSLEEGSADAHLMGKLTSAHEIQLGFTLLDYPDVIQTCARILEPQKMVEYLHSVAELYHRFYQECPILKADPDIRSARLILSLATRQVLRNGFRILGISAPKSM.

The 'HIGH' region signature appears at 123 to 133; the sequence is ANPTGPLTIGR.

This sequence belongs to the class-I aminoacyl-tRNA synthetase family. Monomer.

It is found in the cytoplasm. It carries out the reaction tRNA(Arg) + L-arginine + ATP = L-arginyl-tRNA(Arg) + AMP + diphosphate. The polypeptide is Arginine--tRNA ligase (Chlorobium phaeobacteroides (strain BS1)).